The sequence spans 104 residues: Thioredoxin (104 aa).

A Thioredoxin domain is found at 2–104 (KQVSDASFEE…KLFEWVEASV (103 aa)). Cysteines 29 and 32 form a disulfide.

This sequence belongs to the thioredoxin family.

Participates in various redox reactions through the reversible oxidation of its active center dithiol to a disulfide and catalyzes dithiol-disulfide exchange reactions. This is Thioredoxin (trxA) from Rhodospirillum rubrum.